The primary structure comprises 219 residues: Claudin-20 (219 aa).

Over 1–7 (MASAGLQ) the chain is Cytoplasmic. Residues 8-28 (LLAFILALSGVSGVLTATLLP) form a helical membrane-spanning segment. Topologically, residues 29 to 81 (NWKVNVDVDSNIITAIVQLHGLWMDCTWYSTGMFSCALKHSILSLPIHVQAAR) are extracellular. The helical transmembrane segment at 82 to 102 (ATMVLACVLSALGICTSTVGM) threads the bilayer. Topologically, residues 103–118 (KCTRLGGDRETKSHAS) are cytoplasmic. The helical transmembrane segment at 119 to 139 (FAGGVCFMSAGISSLISTVWY) threads the bilayer. Topologically, residues 140 to 160 (TKEIIANFLDLTVPESNKHEP) are extracellular. A helical transmembrane segment spans residues 161–181 (GGAIYIGFISAMLLFISGMIF). At 182-219 (CTSCIKRNPEARLDPPTQQPISNTQLENNSTHNLKDYV) the chain is on the cytoplasmic side. The segment at 193-219 (RLDPPTQQPISNTQLENNSTHNLKDYV) is disordered. Residues 200-213 (QPISNTQLENNSTH) are compositionally biased toward polar residues.

This sequence belongs to the claudin family.

The protein resides in the cell junction. It is found in the tight junction. It localises to the cell membrane. Its function is as follows. Plays a major role in tight junction-specific obliteration of the intercellular space, through calcium-independent cell-adhesion activity. This chain is Claudin-20 (CLDN20), found in Homo sapiens (Human).